A 516-amino-acid chain; its full sequence is Effector protein hopAB1 (516 aa).

Disordered stretches follow at residues 1-93 (MSGI…AQPA) and 175-259 (RALA…DEAL). The segment covering 16–30 (WRADDEPVTERERDS) has biased composition (basic and acidic residues). Positions 31–41 (SSGANLTNSPQ) are enriched in polar residues. A compositionally biased stretch (pro residues) spans 81 to 90 (PVEPRQPPEA). Composition is skewed to low complexity over residues 183 to 196 (PAPS…SRSS) and 212 to 224 (QTSS…SSTS).

This sequence belongs to the HopAB family.

The protein localises to the secreted. Its function is as follows. Effector protein that plays different roles depending on the species and plant cultivars that interact with the pathogen. Acts as a virulence determinant by enhancing the development of disease symptoms and bacterial growth. Acts as an avirulence factor by eliciting hypersensitive response (HR) and plant resistance. The polypeptide is Effector protein hopAB1 (hopAB1) (Pseudomonas syringae pv. syringae (strain B728a)).